The sequence spans 360 residues: Histidinol-phosphate aminotransferase (360 aa).

K208 is subject to N6-(pyridoxal phosphate)lysine.

This sequence belongs to the class-II pyridoxal-phosphate-dependent aminotransferase family. Histidinol-phosphate aminotransferase subfamily. In terms of assembly, homodimer. It depends on pyridoxal 5'-phosphate as a cofactor.

It carries out the reaction L-histidinol phosphate + 2-oxoglutarate = 3-(imidazol-4-yl)-2-oxopropyl phosphate + L-glutamate. It functions in the pathway amino-acid biosynthesis; L-histidine biosynthesis; L-histidine from 5-phospho-alpha-D-ribose 1-diphosphate: step 7/9. This is Histidinol-phosphate aminotransferase (hisC) from Lactococcus lactis subsp. lactis (strain IL1403) (Streptococcus lactis).